The following is a 413-amino-acid chain: Arginine biosynthesis bifunctional protein ArgJ 1 (413 aa).

Substrate is bound by residues Thr-154, Lys-180, Thr-191, Glu-277, Asn-408, and Thr-413. Thr-191 serves as the catalytic Nucleophile.

The protein belongs to the ArgJ family. Heterotetramer of two alpha and two beta chains.

It is found in the cytoplasm. The enzyme catalyses N(2)-acetyl-L-ornithine + L-glutamate = N-acetyl-L-glutamate + L-ornithine. It catalyses the reaction L-glutamate + acetyl-CoA = N-acetyl-L-glutamate + CoA + H(+). It functions in the pathway amino-acid biosynthesis; L-arginine biosynthesis; L-ornithine and N-acetyl-L-glutamate from L-glutamate and N(2)-acetyl-L-ornithine (cyclic): step 1/1. It participates in amino-acid biosynthesis; L-arginine biosynthesis; N(2)-acetyl-L-ornithine from L-glutamate: step 1/4. In terms of biological role, catalyzes two activities which are involved in the cyclic version of arginine biosynthesis: the synthesis of N-acetylglutamate from glutamate and acetyl-CoA as the acetyl donor, and of ornithine by transacetylation between N(2)-acetylornithine and glutamate. This is Arginine biosynthesis bifunctional protein ArgJ 1 from Nostoc sp. (strain PCC 7120 / SAG 25.82 / UTEX 2576).